We begin with the raw amino-acid sequence, 164 residues long: Putative 4-hydroxy-4-methyl-2-oxoglutarate aldolase (164 aa).

Substrate-binding positions include G74–L77 and R96. An a divalent metal cation-binding site is contributed by D97.

It belongs to the class II aldolase/RraA-like family. As to quaternary structure, homotrimer. A divalent metal cation serves as cofactor.

It catalyses the reaction 4-hydroxy-4-methyl-2-oxoglutarate = 2 pyruvate. The catalysed reaction is oxaloacetate + H(+) = pyruvate + CO2. Its function is as follows. Catalyzes the aldol cleavage of 4-hydroxy-4-methyl-2-oxoglutarate (HMG) into 2 molecules of pyruvate. Also contains a secondary oxaloacetate (OAA) decarboxylase activity due to the common pyruvate enolate transition state formed following C-C bond cleavage in the retro-aldol and decarboxylation reactions. This is Putative 4-hydroxy-4-methyl-2-oxoglutarate aldolase from Thermus thermophilus (strain ATCC BAA-163 / DSM 7039 / HB27).